The following is a 242-amino-acid chain: Type III pantothenate kinase (242 aa).

7–14 contacts ATP; it reads DLGNSRFK. Substrate is bound by residues Tyr-91 and 98–101; that span reads GVDR. Asp-100 (proton acceptor) is an active-site residue. Thr-121 provides a ligand contact to ATP. Thr-171 serves as a coordination point for substrate.

The protein belongs to the type III pantothenate kinase family. As to quaternary structure, homodimer. Requires NH4(+) as cofactor. The cofactor is K(+).

The protein localises to the cytoplasm. The catalysed reaction is (R)-pantothenate + ATP = (R)-4'-phosphopantothenate + ADP + H(+). Its pathway is cofactor biosynthesis; coenzyme A biosynthesis; CoA from (R)-pantothenate: step 1/5. Functionally, catalyzes the phosphorylation of pantothenate (Pan), the first step in CoA biosynthesis. The protein is Type III pantothenate kinase of Xanthomonas campestris pv. campestris (strain 8004).